The sequence spans 134 residues: Protein Turandot E (134 aa).

A signal peptide spans 1–38; sequence MSYNRTLHSTTSILKMNSALQISCLLLVLGCLLGSGHG.

This sequence belongs to the Turandot family.

Its subcellular location is the secreted. A humoral factor that may play a role in stress tolerance. This Drosophila yakuba (Fruit fly) protein is Protein Turandot E.